The chain runs to 226 residues: Late protein I226R (226 aa).

The first 16 residues, 1–16, serve as a signal peptide directing secretion; it reads MKMETFLVCLFHNADG. Residues Asn-142 and Asn-164 are each glycosylated (N-linked (GlcNAc...) asparagine; by host).

Belongs to the asfivirus I226R family.

Plays a role in the inhibition of host NF-kappa-B and IRF3 signaling pathways. Mechanistically, promotes the degradation of host IKBKG through enhancing its ubiquitination leading to inhibition of both pathways. This chain is Late protein I226R, found in African swine fever virus (isolate Warthog/Namibia/Wart80/1980) (ASFV).